The primary structure comprises 325 residues: Deoxyhypusine hydroxylase (325 aa).

An N-acetylserine modification is found at Ser-2. HEAT-like PBS-type repeat units follow at residues 77-103 and 110-136; these read LKHE…VMLD and VRHE…AAKE. Residues His-79, Glu-80, His-112, and Glu-113 each coordinate Fe cation. Ser-126 carries the post-translational modification Phosphoserine. A Phosphothreonine modification is found at Thr-187. 3 HEAT-like PBS-type repeats span residues 202–231, 235–261, and 268–294; these read LFQR…FSAE, FKHE…VLGR, and VRHE…YLND. Fe cation-binding residues include His-237, Glu-238, His-270, and Glu-271. Ser-281 bears the Phosphoserine mark.

It belongs to the deoxyhypusine hydroxylase family. It depends on Fe(2+) as a cofactor.

It localises to the cytoplasm. It is found in the nucleus. It carries out the reaction [eIF5A protein]-deoxyhypusine + AH2 + O2 = [eIF5A protein]-hypusine + A + H2O. It functions in the pathway protein modification; eIF5A hypusination. Its function is as follows. Catalyzes the hydroxylation of the N(6)-(4-aminobutyl)-L-lysine intermediate to form hypusine, an essential post-translational modification only found in mature eIF-5A factor. In Saccharomyces cerevisiae (strain ATCC 204508 / S288c) (Baker's yeast), this protein is Deoxyhypusine hydroxylase.